A 159-amino-acid chain; its full sequence is Olfactory receptor-like protein COR8 (159 aa).

Residues 1–16 (VAICNPLLYTISMPKS) lie on the Cytoplasmic side of the membrane. Residues 17–41 (LCMKLVAGSYLGGVLNSLTQTCCLL) traverse the membrane as a helical segment. The Extracellular segment spans residues 42-82 (PLPFCGPNVINHYFCDTNPLLKLTCSDGRLNELLLVTFNGT). N-linked (GlcNAc...) asparagine glycosylation occurs at N80. Residues 83–103 (ISMTVLLIIVISYVYILVSIL) form a helical membrane-spanning segment. Residues 104-116 (SIRSARGRHKAFS) are Cytoplasmic-facing. The helical transmembrane segment at 117–137 (TCASHLLTVTLFYVPAGLSHM) threads the bilayer. The Extracellular segment spans residues 138 to 148 (QPGSKYSLDME). Residues 149–159 (KVTAVFYTLLV) form a helical membrane-spanning segment.

It belongs to the G-protein coupled receptor 1 family.

The protein localises to the cell membrane. In terms of biological role, odorant receptor. The protein is Olfactory receptor-like protein COR8 (COR8) of Gallus gallus (Chicken).